Here is a 77-residue protein sequence, read N- to C-terminus: Putative neurotoxin 1 (77 aa).

Residues 1-25 form the signal peptide; sequence MKAFIVILSIAIVLLLIVSIKETSA. A propeptide spanning residues 26 to 46 is cleaved from the precursor; the sequence is KDCKQECVKRYTKGDLTNFLK.

Belongs to the scolopendra neurotoxin 3 family. Contains 2 disulfide bonds. In terms of tissue distribution, expressed by the venom gland.

The protein localises to the secreted. The protein is Putative neurotoxin 1 of Scolopendra subspinipes (Vietnamese centipede).